Reading from the N-terminus, the 420-residue chain is Synaptosomal-associated protein 47 (420 aa).

2 consecutive t-SNARE coiled-coil homology domains span residues 110–172 (AEAA…LTEL) and 357–419 (TSEP…MKKL). The disordered stretch occupies residues 338-357 (ATHCEPSSGSQEGRPLQLQT). Positions 342-357 (EPSSGSQEGRPLQLQT) are enriched in polar residues.

It belongs to the SVAP1 family. Forms a complex containing SNAP47, VAMP2 and STX1A. Associates with the BLOC-1 complex. Interacts with BLOC1S6.

Its subcellular location is the endomembrane system. It localises to the cytoplasm. It is found in the perinuclear region. Its function is as follows. May play a role in intracellular membrane fusion. The polypeptide is Synaptosomal-associated protein 47 (SNAP47) (Bos taurus (Bovine)).